We begin with the raw amino-acid sequence, 87 residues long: uncharacterized protein (87 aa).

This is an uncharacterized protein from Methanocaldococcus jannaschii (strain ATCC 43067 / DSM 2661 / JAL-1 / JCM 10045 / NBRC 100440) (Methanococcus jannaschii).